Reading from the N-terminus, the 621-residue chain is Replication factor A protein 1 (621 aa).

The residue at position 2 (Ser2) is an N-acetylserine. Ser178 carries the phosphoserine; by ATM or ATR modification. The segment at residues 197–284 (WTIKARVSYK…PYELNLDRDT (88 aa)) is a DNA-binding region (OB). The C4-type zinc-finger motif lies at 486-508 (CSNENCNKKVLEQPDGTWRCEKC).

It belongs to the replication factor A protein 1 family. As to quaternary structure, component of the heterotrimeric canonical replication protein A complex (RPA). Interacts with POB3. The N-terminus is blocked.

It localises to the nucleus. As part of the replication protein A (RPA/RP-A), a single-stranded DNA-binding heterotrimeric complex, may play an essential role in DNA replication, recombination and repair. Binds and stabilizes single-stranded DNA intermediates, preventing complementary DNA reannealing and recruiting different proteins involved in DNA metabolism. Binds to single-stranded sequences participating in DNA replication in addition to those mediating transcriptional repression (URS1) and activation (CAR1). Stimulates the activity of a cognate strand exchange protein (SEP1). It cooperates with T-AG and DNA topoisomerase I to unwind template DNA containing the simian virus 40 origin of DNA replication. This Saccharomyces cerevisiae (strain ATCC 204508 / S288c) (Baker's yeast) protein is Replication factor A protein 1 (RFA1).